A 163-amino-acid polypeptide reads, in one-letter code: Crossover junction endodeoxyribonuclease RuvC (163 aa).

Residues Asp9, Glu76, and Asp148 contribute to the active site. Residues Asp9, Glu76, and Asp148 each contribute to the Mg(2+) site.

It belongs to the RuvC family. Homodimer which binds Holliday junction (HJ) DNA. The HJ becomes 2-fold symmetrical on binding to RuvC with unstacked arms; it has a different conformation from HJ DNA in complex with RuvA. In the full resolvosome a probable DNA-RuvA(4)-RuvB(12)-RuvC(2) complex forms which resolves the HJ. Requires Mg(2+) as cofactor.

Its subcellular location is the cytoplasm. The catalysed reaction is Endonucleolytic cleavage at a junction such as a reciprocal single-stranded crossover between two homologous DNA duplexes (Holliday junction).. Its function is as follows. The RuvA-RuvB-RuvC complex processes Holliday junction (HJ) DNA during genetic recombination and DNA repair. Endonuclease that resolves HJ intermediates. Cleaves cruciform DNA by making single-stranded nicks across the HJ at symmetrical positions within the homologous arms, yielding a 5'-phosphate and a 3'-hydroxyl group; requires a central core of homology in the junction. The consensus cleavage sequence is 5'-(A/T)TT(C/G)-3'. Cleavage occurs on the 3'-side of the TT dinucleotide at the point of strand exchange. HJ branch migration catalyzed by RuvA-RuvB allows RuvC to scan DNA until it finds its consensus sequence, where it cleaves and resolves the cruciform DNA. In Trichodesmium erythraeum (strain IMS101), this protein is Crossover junction endodeoxyribonuclease RuvC.